We begin with the raw amino-acid sequence, 711 residues long: Ribosomal RNA large subunit methyltransferase K/L (711 aa).

The region spanning 43-154 (LGYRITLWSR…RGQITIGLNF (112 aa)) is the THUMP domain.

It belongs to the methyltransferase superfamily. RlmKL family.

It is found in the cytoplasm. The enzyme catalyses guanosine(2445) in 23S rRNA + S-adenosyl-L-methionine = N(2)-methylguanosine(2445) in 23S rRNA + S-adenosyl-L-homocysteine + H(+). It catalyses the reaction guanosine(2069) in 23S rRNA + S-adenosyl-L-methionine = N(2)-methylguanosine(2069) in 23S rRNA + S-adenosyl-L-homocysteine + H(+). Functionally, specifically methylates the guanine in position 2445 (m2G2445) and the guanine in position 2069 (m7G2069) of 23S rRNA. In Shewanella sediminis (strain HAW-EB3), this protein is Ribosomal RNA large subunit methyltransferase K/L.